The following is a 731-amino-acid chain: Catalase-peroxidase (731 aa).

The tryptophyl-tyrosyl-methioninium (Trp-Tyr) (with M-252) cross-link spans 98-226; it reads WHAAGTYRTA…LAAVQMGLIY (129 aa). H99 acts as the Proton acceptor in catalysis. The segment at residues 226-252 is a cross-link (tryptophyl-tyrosyl-methioninium (Tyr-Met) (with W-98)); that stretch reads YVNPEGPDGNPDIVASGHDVIETFGRM. Heme b is bound at residue H267.

Belongs to the peroxidase family. Peroxidase/catalase subfamily. Homodimer or homotetramer. Heme b serves as cofactor. In terms of processing, formation of the three residue Trp-Tyr-Met cross-link is important for the catalase, but not the peroxidase activity of the enzyme.

The catalysed reaction is H2O2 + AH2 = A + 2 H2O. It catalyses the reaction 2 H2O2 = O2 + 2 H2O. Bifunctional enzyme with both catalase and broad-spectrum peroxidase activity. The sequence is that of Catalase-peroxidase from Ruegeria pomeroyi (strain ATCC 700808 / DSM 15171 / DSS-3) (Silicibacter pomeroyi).